The chain runs to 256 residues: uncharacterized protein (256 aa).

The signal sequence occupies residues 1–22 (MNNFRQCALCIGTSVLILLVSG). A lipid anchor (N-palmitoyl cysteine) is attached at C23. C23 carries the S-diacylglycerol cysteine lipid modification.

This sequence belongs to the staphylococcal tandem lipoprotein family.

Its subcellular location is the cell membrane. This is an uncharacterized protein from Staphylococcus aureus (strain bovine RF122 / ET3-1).